We begin with the raw amino-acid sequence, 976 residues long: Receptor-like protein 14 (976 aa).

An N-terminal signal peptide occupies residues 1-26 (MERKVFSGQNLIWVMLLLVQLRGYKC). The Extracellular portion of the chain corresponds to 27–928 (CIEKERKALL…DDDDEAAIDM (902 aa)). N-linked (GlcNAc...) asparagine glycosylation is found at asparagine 60, asparagine 75, asparagine 98, asparagine 112, asparagine 151, asparagine 185, and asparagine 200. 17 LRR repeats span residues 105 to 127 (FEELRSLNLSGEIYNEFNGLFDD), 137 to 160 (LRNLEILDLSSNSFNNSIFPFLNA), 162 to 185 (TSLTTLFIQSNYIGGPLPIKELKN), 186 to 209 (LTKLELLDLSRSGYNGSIPEFTHL), 210 to 233 (EKLKALDLSANDFSSLVELQELKV), 234 to 258 (LTNLEVLGLAWNHLDGPIPKEVFCE), 260 to 283 (KNLRQLDLRGNYFEGQLPVCLGNL), 284 to 306 (NKLRVLDLSSNQLSGNLPASFNS), 308 to 331 (ESLEYLSLSDNNFEGFFSLNPLAN), 333 to 358 (TKLKVFRLSSTSEMLQVETESNWLPK), 359 to 381 (FQLTVAALPFCSLGKIPNFLVYQ), 382 to 405 (TNLRLVDLSSNRLSGDIPTWLLEN), 407 to 428 (PELKVLQLKNNSFTIFQIPTIV), 429 to 452 (HKLQVLDFSANDITGVLPDNIGHV), 454 to 477 (PRLLHMNGSHNGFQGNLPSSMGEM), 478 to 501 (NDISFLDLSYNNFSGELPRSLLTG), and 503 to 528 (FSLITLQLSHNSFSGPILPIQTRLTS). Asparagine 331 carries N-linked (GlcNAc...) asparagine glycosylation. N-linked (GlcNAc...) asparagine glycosylation occurs at asparagine 416. N-linked (GlcNAc...) asparagine glycosylation is found at asparagine 460 and asparagine 489. The LRR 18; degenerate repeat unit spans residues 530-549 (IVLRMHNNLFTGEIGVGLRT). LRR repeat units follow at residues 550–573 (LVNLSIFDASNNRLTGLISSSIPP), 575–599 (SSHLIMLLLSNNLLEGTLPPSLLAI), 600–623 (HHLNFLDLSGNLLSGDLPSSVVNS), 625–645 (YGIKIFLHNNSFTGPLPVTLL), 646–669 (ENAYILDLRNNKLSGSIPQFVNTG), 671–692 (MITLLLRGNNLTGSIPRKLCDL), 693–715 (TSIRLLDLSDNKLNGVIPPCLNH), 782–805 (LDYMYGLDLSSNELSGVIPAELGD), 806–829 (LSKLRALNLSRNLLSSSIPANFSK), 831–854 (KDIESLDLSYNMLQGNIPHQLTNL), and 856–879 (SLAVFNVSFNNLSGIIPQGGQFNT). The N-linked (GlcNAc...) asparagine glycan is linked to asparagine 552. N-linked (GlcNAc...) asparagine glycosylation is present at asparagine 633. Asparagine 680 carries an N-linked (GlcNAc...) asparagine glycan. Asparagine 813, asparagine 826, asparagine 853, asparagine 861, and asparagine 866 each carry an N-linked (GlcNAc...) asparagine glycan. A disordered region spans residues 897–922 (DRSCEGKKNTKEADNGGEEEEEDDDD). Over residues 898–910 (RSCEGKKNTKEAD) the composition is skewed to basic and acidic residues. The segment covering 911–922 (NGGEEEEEDDDD) has biased composition (acidic residues). A helical membrane pass occupies residues 929–949 (VVLYWTTGSTYAIALIGILVL). Residues 950–976 (MCFDCPWRRTWLCIVDAFIASGKSMFS) are Cytoplasmic-facing.

Belongs to the RLP family.

The protein localises to the cell membrane. In Arabidopsis thaliana (Mouse-ear cress), this protein is Receptor-like protein 14.